We begin with the raw amino-acid sequence, 543 residues long: CTP synthase (543 aa).

The amidoligase domain stretch occupies residues M1–L266. S14 contacts CTP. Residue S14 coordinates UTP. ATP-binding positions include S15–I20 and D72. Residues D72 and E140 each coordinate Mg(2+). CTP is bound by residues D147–E149, K187–Q192, and K223. UTP is bound by residues K187–Q192 and K223. K239 to V241 contacts ATP. The Glutamine amidotransferase type-1 domain maps to T291–K538. G352 contributes to the L-glutamine binding site. C379 (nucleophile; for glutamine hydrolysis) is an active-site residue. Residues L380–Q383, E403, and R466 each bind L-glutamine. Catalysis depends on residues H511 and E513.

The protein belongs to the CTP synthase family. In terms of assembly, homotetramer.

It catalyses the reaction UTP + L-glutamine + ATP + H2O = CTP + L-glutamate + ADP + phosphate + 2 H(+). The enzyme catalyses L-glutamine + H2O = L-glutamate + NH4(+). It carries out the reaction UTP + NH4(+) + ATP = CTP + ADP + phosphate + 2 H(+). It functions in the pathway pyrimidine metabolism; CTP biosynthesis via de novo pathway; CTP from UDP: step 2/2. Its activity is regulated as follows. Allosterically activated by GTP, when glutamine is the substrate; GTP has no effect on the reaction when ammonia is the substrate. The allosteric effector GTP functions by stabilizing the protein conformation that binds the tetrahedral intermediate(s) formed during glutamine hydrolysis. Inhibited by the product CTP, via allosteric rather than competitive inhibition. Its function is as follows. Catalyzes the ATP-dependent amination of UTP to CTP with either L-glutamine or ammonia as the source of nitrogen. Regulates intracellular CTP levels through interactions with the four ribonucleotide triphosphates. In Baumannia cicadellinicola subsp. Homalodisca coagulata, this protein is CTP synthase.